The primary structure comprises 225 residues: MSRETASSEITPELLLRAYACGIFPMAESVDDPTLFWVEPKMRGVVPLESFRIPSRLARTVRSDSFTVTVDTAFDAVINGCAAPQPGRNNTWINHRIRELYIGLHELGHCHSVEVWRDNELAGGLYGVRLGRAFFGESMFHVVRDASKVALVHLVARLIAGGFVLLDTQFVTDHLRGFGAIEIPRRRYRALLDVALEGRADFGALPLDRPVPGAEALKAIADRSS.

The protein belongs to the L/F-transferase family.

Its subcellular location is the cytoplasm. The catalysed reaction is N-terminal L-lysyl-[protein] + L-leucyl-tRNA(Leu) = N-terminal L-leucyl-L-lysyl-[protein] + tRNA(Leu) + H(+). It catalyses the reaction N-terminal L-arginyl-[protein] + L-leucyl-tRNA(Leu) = N-terminal L-leucyl-L-arginyl-[protein] + tRNA(Leu) + H(+). It carries out the reaction L-phenylalanyl-tRNA(Phe) + an N-terminal L-alpha-aminoacyl-[protein] = an N-terminal L-phenylalanyl-L-alpha-aminoacyl-[protein] + tRNA(Phe). Functions in the N-end rule pathway of protein degradation where it conjugates Leu, Phe and, less efficiently, Met from aminoacyl-tRNAs to the N-termini of proteins containing an N-terminal arginine or lysine. The protein is Leucyl/phenylalanyl-tRNA--protein transferase of Nitrobacter winogradskyi (strain ATCC 25391 / DSM 10237 / CIP 104748 / NCIMB 11846 / Nb-255).